We begin with the raw amino-acid sequence, 320 residues long: MKKVKLSLIANERSRKTSFMKRKNGIFKKLHELSTLCGVQACALIYSPFIPVPESWPSREGAKKVASKFLEMPRTARTRKMMDQETHLMERITKAKEQLKNLAAENRELQVRRFMFDCVEGKMSQYRYDAKDLQDLLSCMNLYLDQLNGRIESIKENGESLLSSVSPFPTRIGVDEIGDESFSDSPIHSTTRVVDTPNATNPHVLAGDMTPFLDADANANMNQVQYQAPNNLFNQIQREFYNINLNLNLNLNSNQYLNQQQSFMNPMVEQHMNHVGGRESIPFVDRNYYNYNQLPAVDLASTSYMPSTTDVYDPYINNNL.

An MADS-box domain is found at 1-59; it reads MKKVKLSLIANERSRKTSFMKRKNGIFKKLHELSTLCGVQACALIYSPFIPVPESWPSR. A coiled-coil region spans residues 80–115; it reads KMMDQETHLMERITKAKEQLKNLAAENRELQVRRFM.

In terms of assembly, interacts with AGL62.

The protein resides in the nucleus. Probable transcription factor. In Arabidopsis thaliana (Mouse-ear cress), this protein is Agamous-like MADS-box protein AGL90 (AGL90).